The chain runs to 244 residues: 2,3-bisphosphoglycerate-dependent phosphoglycerate mutase (244 aa).

Residues 8–15 (RHGESNWN), 21–22 (TG), arginine 60, 87–90 (ERHY), lysine 98, 114–115 (RR), and 181–182 (GN) each bind substrate. The active-site Tele-phosphohistidine intermediate is the histidine 9. Glutamate 87 acts as the Proton donor/acceptor in catalysis.

The protein belongs to the phosphoglycerate mutase family. BPG-dependent PGAM subfamily.

The enzyme catalyses (2R)-2-phosphoglycerate = (2R)-3-phosphoglycerate. It functions in the pathway carbohydrate degradation; glycolysis; pyruvate from D-glyceraldehyde 3-phosphate: step 3/5. Catalyzes the interconversion of 2-phosphoglycerate and 3-phosphoglycerate. The sequence is that of 2,3-bisphosphoglycerate-dependent phosphoglycerate mutase from Frankia alni (strain DSM 45986 / CECT 9034 / ACN14a).